Here is a 461-residue protein sequence, read N- to C-terminus: Ribulose bisphosphate carboxylase (461 aa).

Asn-112 serves as a coordination point for substrate. The Proton acceptor role is filled by Lys-167. Substrate is bound at residue Lys-169. 3 residues coordinate Mg(2+): Lys-192, Asp-194, and Glu-195. An N6-carboxylysine modification is found at Lys-192. The Proton acceptor role is filled by His-288. 3 residues coordinate substrate: Arg-289, His-322, and Ser-369.

Belongs to the RuBisCO large chain family. Type II subfamily. In terms of assembly, homodimer. Requires Mg(2+) as cofactor.

It carries out the reaction 2 (2R)-3-phosphoglycerate + 2 H(+) = D-ribulose 1,5-bisphosphate + CO2 + H2O. It catalyses the reaction D-ribulose 1,5-bisphosphate + O2 = 2-phosphoglycolate + (2R)-3-phosphoglycerate + 2 H(+). Its function is as follows. RuBisCO catalyzes two reactions: the carboxylation of D-ribulose 1,5-bisphosphate, the primary event in carbon dioxide fixation, as well as the oxidative fragmentation of the pentose substrate. Both reactions occur simultaneously and in competition at the same active site. The chain is Ribulose bisphosphate carboxylase from Rhodopseudomonas palustris (strain ATCC BAA-98 / CGA009).